Reading from the N-terminus, the 431-residue chain is Dual-specificity RNA methyltransferase RlmN (431 aa).

The segment at 1-26 (MATASLDTARPERRAGSDPFIEKTPE) is disordered. Residues 9 to 26 (ARPERRAGSDPFIEKTPE) are compositionally biased toward basic and acidic residues. E138 serves as the catalytic Proton acceptor. Residues 144–394 (ANDRGTLCVS…VRTPRGRDIL (251 aa)) form the Radical SAM core domain. C151 and C397 form a disulfide bridge. Positions 158, 162, and 165 each coordinate [4Fe-4S] cluster. S-adenosyl-L-methionine-binding positions include 223–224 (GE), S255, 277–279 (SLH), and N354. Residue C397 is the S-methylcysteine intermediate of the active site.

The protein belongs to the radical SAM superfamily. RlmN family. Requires [4Fe-4S] cluster as cofactor.

It is found in the cytoplasm. It catalyses the reaction adenosine(2503) in 23S rRNA + 2 reduced [2Fe-2S]-[ferredoxin] + 2 S-adenosyl-L-methionine = 2-methyladenosine(2503) in 23S rRNA + 5'-deoxyadenosine + L-methionine + 2 oxidized [2Fe-2S]-[ferredoxin] + S-adenosyl-L-homocysteine. The catalysed reaction is adenosine(37) in tRNA + 2 reduced [2Fe-2S]-[ferredoxin] + 2 S-adenosyl-L-methionine = 2-methyladenosine(37) in tRNA + 5'-deoxyadenosine + L-methionine + 2 oxidized [2Fe-2S]-[ferredoxin] + S-adenosyl-L-homocysteine. Its function is as follows. Specifically methylates position 2 of adenine 2503 in 23S rRNA and position 2 of adenine 37 in tRNAs. m2A2503 modification seems to play a crucial role in the proofreading step occurring at the peptidyl transferase center and thus would serve to optimize ribosomal fidelity. The chain is Dual-specificity RNA methyltransferase RlmN from Methylobacterium sp. (strain 4-46).